Reading from the N-terminus, the 1196-residue chain is Major DNA-binding protein (1196 aa).

A zinc finger lies at 499–512 (CNLCTFDTRHACVH). 2 short sequence motifs (required for filament formation) span residues 843 to 844 (FW) and 1142 to 1144 (FNF). Residues 1158–1196 (GGPGAPGPAFAGRKRAFHGDDPFGEGPPDKKGDLTLDML) form a disordered region. A required for nuclear localization region spans residues 1170-1196 (RKRAFHGDDPFGEGPPDKKGDLTLDML). The segment covering 1174–1196 (FHGDDPFGEGPPDKKGDLTLDML) has biased composition (basic and acidic residues).

The protein belongs to the herpesviridae major DNA-binding protein family. Homooligomers. Forms double-helical filaments necessary for the formation of replication compartments within the host nucleus. Interacts with the origin-binding protein. Interacts with the helicase primase complex; this interaction stimulates primer synthesis activity of the helicase-primase complex. Interacts with the DNA polymerase. Interacts with the alkaline exonuclease; this interaction increases its nuclease processivity.

It is found in the host nucleus. Its function is as follows. Plays several crucial roles in viral infection. Participates in the opening of the viral DNA origin to initiate replication by interacting with the origin-binding protein. May disrupt loops, hairpins and other secondary structures present on ssDNA to reduce and eliminate pausing of viral DNA polymerase at specific sites during elongation. Promotes viral DNA recombination by performing strand-transfer, characterized by the ability to transfer a DNA strand from a linear duplex to a complementary single-stranded DNA circle. Can also catalyze the renaturation of complementary single strands. Additionally, reorganizes the host cell nucleus, leading to the formation of prereplicative sites and replication compartments. This process is driven by the protein which can form double-helical filaments in the absence of DNA. The sequence is that of Major DNA-binding protein from Human herpesvirus 1 (strain KOS) (HHV-1).